A 143-amino-acid chain; its full sequence is D-aminoacyl-tRNA deacylase (143 aa).

Positions 135 to 136 (GP) match the Gly-cisPro motif, important for rejection of L-amino acids motif.

The protein belongs to the DTD family. In terms of assembly, homodimer.

It is found in the cytoplasm. The enzyme catalyses glycyl-tRNA(Ala) + H2O = tRNA(Ala) + glycine + H(+). It carries out the reaction a D-aminoacyl-tRNA + H2O = a tRNA + a D-alpha-amino acid + H(+). Its function is as follows. An aminoacyl-tRNA editing enzyme that deacylates mischarged D-aminoacyl-tRNAs. Also deacylates mischarged glycyl-tRNA(Ala), protecting cells against glycine mischarging by AlaRS. Acts via tRNA-based rather than protein-based catalysis; rejects L-amino acids rather than detecting D-amino acids in the active site. By recycling D-aminoacyl-tRNA to D-amino acids and free tRNA molecules, this enzyme counteracts the toxicity associated with the formation of D-aminoacyl-tRNA entities in vivo and helps enforce protein L-homochirality. The polypeptide is D-aminoacyl-tRNA deacylase (Mycolicibacterium gilvum (strain PYR-GCK) (Mycobacterium gilvum (strain PYR-GCK))).